We begin with the raw amino-acid sequence, 382 residues long: Probable inactive dehydrogenase easA (382 aa).

FMN is bound by residues 25–27, alanine 60, glutamine 102, and histidine 171; that span reads PMT. Histidine 171 and asparagine 174 together coordinate substrate. FMN-binding positions include lysine 223, glycine 299, 324–325, and arginine 325; that span reads GR. Tyrosine 352 lines the substrate pocket.

This sequence belongs to the NADH:flavin oxidoreductase/NADH oxidase family.

In terms of biological role, probable inactive dehydrogenase; part of the gene cluster that mediates the biosynthesis of fungal ergot alkaloid. DmaW catalyzes the first step of ergot alkaloid biosynthesis by condensing dimethylallyl diphosphate (DMAP) and tryptophan to form 4-dimethylallyl-L-tryptophan. The second step is catalyzed by the methyltransferase easF that methylates 4-dimethylallyl-L-tryptophan in the presence of S-adenosyl-L-methionine, resulting in the formation of 4-dimethylallyl-L-abrine. The catalase easC and the FAD-dependent oxidoreductase easE then transform 4-dimethylallyl-L-abrine to chanoclavine-I which is further oxidized by easD in the presence of NAD(+), resulting in the formation of chanoclavine-I aldehyde. Agroclavine dehydrogenase easG then mediates the conversion of chanoclavine-I aldehyde to agroclavine via a non-enzymatic adduct reaction: the substrate is an iminium intermediate that is formed spontaneously from chanoclavine-I aldehyde in the presence of glutathione. Further conversion of agroclavine to paspalic acid is a two-step process involving oxidation of agroclavine to elymoclavine and of elymoclavine to paspalic acid, the second step being performed by the elymoclavine oxidase cloA. However, cloA does not encode a functional enzyme indicating that C.fusiformis terminates its ergot alkaloid pathway at elymoclavine. The polypeptide is Probable inactive dehydrogenase easA (Claviceps fusiformis (Ergot fungus)).